We begin with the raw amino-acid sequence, 304 residues long: Non-specific ribonucleoside hydrolase RihC (304 aa).

Residue His-233 is part of the active site.

This sequence belongs to the IUNH family. RihC subfamily.

In terms of biological role, hydrolyzes both purine and pyrimidine ribonucleosides with a broad-substrate specificity. The polypeptide is Non-specific ribonucleoside hydrolase RihC (Escherichia coli O45:K1 (strain S88 / ExPEC)).